The following is a 226-amino-acid chain: Uracil-DNA glycosylase (226 aa).

Catalysis depends on Asp65, which acts as the Proton acceptor.

The protein belongs to the uracil-DNA glycosylase (UDG) superfamily. UNG family.

The protein localises to the cytoplasm. It carries out the reaction Hydrolyzes single-stranded DNA or mismatched double-stranded DNA and polynucleotides, releasing free uracil.. Excises uracil residues from the DNA which can arise as a result of misincorporation of dUMP residues by DNA polymerase or due to deamination of cytosine. This chain is Uracil-DNA glycosylase, found in Enterococcus faecalis (strain ATCC 700802 / V583).